Here is a 441-residue protein sequence, read N- to C-terminus: BTB/POZ domain-containing protein At3g05675 (441 aa).

The BTB domain occupies 20–98 (SDIVVRLRNE…LYVVSDDVHE (79 aa)).

It participates in protein modification; protein ubiquitination. May act as a substrate-specific adapter of an E3 ubiquitin-protein ligase complex (CUL3-RBX1-BTB) which mediates the ubiquitination and subsequent proteasomal degradation of target proteins. The protein is BTB/POZ domain-containing protein At3g05675 of Arabidopsis thaliana (Mouse-ear cress).